The chain runs to 178 residues: Inner membrane-spanning protein YciB (178 aa).

The next 5 helical transmembrane spans lie at 22-42 (IFYASGALIAATGLAVAMTYF), 50-70 (ASLITFIMVAVFGTLTLAFHS), 72-92 (LFIKWKVTVIYALFALALLGS), 121-141 (MAWALFFTACALANIYVAFWL), and 149-169 (FKVFGLTALTLVFTVLSVVYI).

The protein belongs to the YciB family.

Its subcellular location is the cell inner membrane. In terms of biological role, plays a role in cell envelope biogenesis, maintenance of cell envelope integrity and membrane homeostasis. The chain is Inner membrane-spanning protein YciB from Photorhabdus laumondii subsp. laumondii (strain DSM 15139 / CIP 105565 / TT01) (Photorhabdus luminescens subsp. laumondii).